The chain runs to 150 residues: 3-hydroxyacyl-[acyl-carrier-protein] dehydratase FabZ (150 aa).

Histidine 57 is an active-site residue.

The protein belongs to the thioester dehydratase family. FabZ subfamily.

It localises to the cytoplasm. The enzyme catalyses a (3R)-hydroxyacyl-[ACP] = a (2E)-enoyl-[ACP] + H2O. Involved in unsaturated fatty acids biosynthesis. Catalyzes the dehydration of short chain beta-hydroxyacyl-ACPs and long chain saturated and unsaturated beta-hydroxyacyl-ACPs. The polypeptide is 3-hydroxyacyl-[acyl-carrier-protein] dehydratase FabZ (Mannheimia succiniciproducens (strain KCTC 0769BP / MBEL55E)).